The sequence spans 295 residues: uncharacterized protein (295 aa).

Residues 11–25 and threonine 101 contribute to the NAD(+) site; that span reads GYIG…MAKR. The active site involves lysine 176. An NAD(+)-binding site is contributed by lysine 252.

Belongs to the HIBADH-related family.

This is an uncharacterized protein from Mycobacterium tuberculosis (strain CDC 1551 / Oshkosh).